The chain runs to 79 residues: D-alanyl carrier protein (79 aa).

The Carrier domain occupies Met-1 to Arg-77. Ser-35 carries the O-(pantetheine 4'-phosphoryl)serine modification.

Belongs to the DltC family. 4'-phosphopantetheine is transferred from CoA to a specific serine of apo-DCP.

It is found in the cytoplasm. It participates in cell wall biogenesis; lipoteichoic acid biosynthesis. Carrier protein involved in the D-alanylation of lipoteichoic acid (LTA). The loading of thioester-linked D-alanine onto DltC is catalyzed by D-alanine--D-alanyl carrier protein ligase DltA. The DltC-carried D-alanyl group is further transferred to cell membrane phosphatidylglycerol (PG) by forming an ester bond, probably catalyzed by DltD. D-alanylation of LTA plays an important role in modulating the properties of the cell wall in Gram-positive bacteria, influencing the net charge of the cell wall. This chain is D-alanyl carrier protein, found in Lactobacillus johnsonii (strain CNCM I-12250 / La1 / NCC 533).